The following is a 481-amino-acid chain: UDP-N-acetylmuramate--L-alanine ligase (481 aa).

An ATP-binding site is contributed by 115–121 (GTHGKTT).

The protein belongs to the MurCDEF family.

The protein localises to the cytoplasm. It carries out the reaction UDP-N-acetyl-alpha-D-muramate + L-alanine + ATP = UDP-N-acetyl-alpha-D-muramoyl-L-alanine + ADP + phosphate + H(+). It participates in cell wall biogenesis; peptidoglycan biosynthesis. Cell wall formation. This Granulibacter bethesdensis (strain ATCC BAA-1260 / CGDNIH1) protein is UDP-N-acetylmuramate--L-alanine ligase.